The primary structure comprises 497 residues: MSVTVFNPRIDDAAASDITAVTPVITALNELSSAQAPVEKAATKKVFVTTQGCQMNVYDSGKMLDVLGDSHGMEVTHNIDEADVLLMNTCSIREKAQEKVFSELGRWRKLKEKRPDLVIGVGGCVASQEGDNIQKRAPYVDMVFGPQTLHRLPELYDQSHQQREIAPKNRIGTVDVSFPSIEKFDFLPEPRVEGFKAFVSIMEGCSKYCSFCVVPYTRGEELSRPLDDVLAEIDSLAAQGVREINLLGQNVNGYRGEKDDGSICRFAELLHYVSHVDGVERIRYTTSHPLEFTDDIIDAYAQLPELVSHLHLPVQSGSNAILAAMKRNHTIDVYINQINKLKAIRPDIHLSSDFIIGFPGETDQDFQDTLNLAKELNFDHSYSFIYSKRPGTPAAELPDDVSFKTKKERLAEFQKVIIDSTLAKTHEMVGTTTRVLVEQVANRHPDCLIGTADNTRTVMFPYDVDKMDEMLGKIVSVRITDFVSPHMVKGEIEAVLA.

Residues 44 to 161 enclose the MTTase N-terminal domain; that stretch reads KKVFVTTQGC…LPELYDQSHQ (118 aa). Residues Cys53, Cys90, Cys124, Cys205, Cys209, and Cys212 each coordinate [4Fe-4S] cluster. The 233-residue stretch at 191-423 folds into the Radical SAM core domain; sequence RVEGFKAFVS…QKVIIDSTLA (233 aa). Residues 426–494 form the TRAM domain; it reads HEMVGTTTRV…PHMVKGEIEA (69 aa).

Belongs to the methylthiotransferase family. MiaB subfamily. As to quaternary structure, monomer. [4Fe-4S] cluster serves as cofactor.

The protein localises to the cytoplasm. It carries out the reaction N(6)-dimethylallyladenosine(37) in tRNA + (sulfur carrier)-SH + AH2 + 2 S-adenosyl-L-methionine = 2-methylsulfanyl-N(6)-dimethylallyladenosine(37) in tRNA + (sulfur carrier)-H + 5'-deoxyadenosine + L-methionine + A + S-adenosyl-L-homocysteine + 2 H(+). Its function is as follows. Catalyzes the methylthiolation of N6-(dimethylallyl)adenosine (i(6)A), leading to the formation of 2-methylthio-N6-(dimethylallyl)adenosine (ms(2)i(6)A) at position 37 in tRNAs that read codons beginning with uridine. The polypeptide is tRNA-2-methylthio-N(6)-dimethylallyladenosine synthase (Psychrobacter cryohalolentis (strain ATCC BAA-1226 / DSM 17306 / VKM B-2378 / K5)).